Consider the following 246-residue polypeptide: Ribulose-phosphate 3-epimerase (246 aa).

Substrate is bound at residue S9. Residues H34, D36, and H83 each contribute to the a divalent metal cation site. The active-site Proton acceptor is D36. Substrate contacts are provided by residues H83, G159–G162, D188–G190, and G210–S212. D188 is an a divalent metal cation binding site. D188 (proton donor) is an active-site residue.

Belongs to the ribulose-phosphate 3-epimerase family. Co(2+) is required as a cofactor. The cofactor is Fe(2+). It depends on Mn(2+) as a cofactor. Requires Zn(2+) as cofactor.

The enzyme catalyses D-ribulose 5-phosphate = D-xylulose 5-phosphate. It participates in carbohydrate degradation; pentose phosphate pathway; D-xylulose 5-phosphate from D-ribulose 5-phosphate (non-oxidative stage): step 1/1. Functionally, catalyzes the reversible epimerization of D-ribulose 5-phosphate to D-xylulose 5-phosphate. The sequence is that of Ribulose-phosphate 3-epimerase (RPE1) from Candida glabrata (strain ATCC 2001 / BCRC 20586 / JCM 3761 / NBRC 0622 / NRRL Y-65 / CBS 138) (Yeast).